Consider the following 391-residue polypeptide: Arrestin-C (391 aa).

A compositionally biased stretch (basic and acidic residues) spans Ala369 to Ser379. Residues Ala369 to Ser391 are disordered.

The protein belongs to the arrestin family. As to quaternary structure, homodimer; disulfide-linked in response to retinal illumination. Interacts with CXCR4; the interaction is dependent on the C-terminal phosphorylation of CXCR4 and modulates the calcium ion mobilization activity of CXCR4. Interacts with GPR84.

The protein localises to the photoreceptor inner segment. It localises to the cell projection. It is found in the cilium. Its subcellular location is the photoreceptor outer segment. In terms of biological role, may play a role in an as yet undefined retina-specific signal transduction. Could bind to photoactivated-phosphorylated red/green opsins. The sequence is that of Arrestin-C (ARR3) from Sus scrofa (Pig).